We begin with the raw amino-acid sequence, 269 residues long: tRNA pseudouridine synthase A (269 aa).

Asp-51 (nucleophile) is an active-site residue. Tyr-109 is a binding site for substrate.

This sequence belongs to the tRNA pseudouridine synthase TruA family. Homodimer.

The catalysed reaction is uridine(38/39/40) in tRNA = pseudouridine(38/39/40) in tRNA. Formation of pseudouridine at positions 38, 39 and 40 in the anticodon stem and loop of transfer RNAs. This Haemophilus influenzae (strain 86-028NP) protein is tRNA pseudouridine synthase A.